A 239-amino-acid chain; its full sequence is THAP domain-containing protein 3 (239 aa).

A THAP-type zinc finger spans residues 1 to 82; the sequence is MPKSCAARQC…LKHNAVPTVF (82 aa). The segment at 84 to 177 is disordered; the sequence is FQDPTQQVRE…RRTPNKQPSD (94 aa). Ser-122 bears the Phosphoserine mark. The short motif at 177 to 180 is the HCFC1-binding motif (HBM) element; the sequence is DHSY.

In terms of assembly, component of a THAP1/THAP3-HCFC1-OGT complex that contains at least, either THAP1 or THAP3, HCFC1 and OGT. Interacts directly with OGT and HCFC1 (via its HBM). Highly expressed in heart, skeletal muscle and placenta. Weaker expression in brain, kidney and liver.

Component of a THAP1/THAP3-HCFC1-OGT complex that is required for the regulation of the transcriptional activity of RRM1. This Homo sapiens (Human) protein is THAP domain-containing protein 3 (THAP3).